The primary structure comprises 358 residues: 3-dehydroquinate synthase (358 aa).

NAD(+) is bound by residues 69 to 74 (DGEAHK), 103 to 107 (GVIGD), 127 to 128 (TT), Lys140, Lys149, and 167 to 170 (CLRT). Positions 182, 245, and 262 each coordinate Zn(2+).

This sequence belongs to the sugar phosphate cyclases superfamily. Dehydroquinate synthase family. Co(2+) is required as a cofactor. Zn(2+) serves as cofactor. It depends on NAD(+) as a cofactor.

It is found in the cytoplasm. The catalysed reaction is 7-phospho-2-dehydro-3-deoxy-D-arabino-heptonate = 3-dehydroquinate + phosphate. The protein operates within metabolic intermediate biosynthesis; chorismate biosynthesis; chorismate from D-erythrose 4-phosphate and phosphoenolpyruvate: step 2/7. In terms of biological role, catalyzes the conversion of 3-deoxy-D-arabino-heptulosonate 7-phosphate (DAHP) to dehydroquinate (DHQ). The protein is 3-dehydroquinate synthase of Tolumonas auensis (strain DSM 9187 / NBRC 110442 / TA 4).